We begin with the raw amino-acid sequence, 510 residues long: Peroxidase 2 (510 aa).

A signal peptide spans 1 to 19 (MRLTYLPLFAGIAIQSASA). The propeptide occupies 20–58 (LPDFFKSSVLKPRRTNSLLINPDAQPDLPTAQQASTAAA). Aspartate 228 serves as the catalytic Proton acceptor. Histidine 362 contributes to the heme binding site.

In terms of assembly, homodimer. The cofactor is heme b.

Its function is as follows. Peroxidase capable of degrading beta-carotene. The protein is Peroxidase 2 of Mycetinis scorodonius (Garlic mushroom).